Reading from the N-terminus, the 149-residue chain is D-aminoacyl-tRNA deacylase (149 aa).

Residues 141–142 (GP) carry the Gly-cisPro motif, important for rejection of L-amino acids motif.

It belongs to the DTD family. As to quaternary structure, homodimer.

The protein localises to the cytoplasm. The enzyme catalyses glycyl-tRNA(Ala) + H2O = tRNA(Ala) + glycine + H(+). The catalysed reaction is a D-aminoacyl-tRNA + H2O = a tRNA + a D-alpha-amino acid + H(+). An aminoacyl-tRNA editing enzyme that deacylates mischarged D-aminoacyl-tRNAs. Also deacylates mischarged glycyl-tRNA(Ala), protecting cells against glycine mischarging by AlaRS. Acts via tRNA-based rather than protein-based catalysis; rejects L-amino acids rather than detecting D-amino acids in the active site. By recycling D-aminoacyl-tRNA to D-amino acids and free tRNA molecules, this enzyme counteracts the toxicity associated with the formation of D-aminoacyl-tRNA entities in vivo and helps enforce protein L-homochirality. The chain is D-aminoacyl-tRNA deacylase from Streptomyces griseus subsp. griseus (strain JCM 4626 / CBS 651.72 / NBRC 13350 / KCC S-0626 / ISP 5235).